A 394-amino-acid chain; its full sequence is Chalcone synthase 4 (394 aa).

The active site involves C165.

Belongs to the thiolase-like superfamily. Chalcone/stilbene synthases family.

The enzyme catalyses (E)-4-coumaroyl-CoA + 3 malonyl-CoA + 3 H(+) = 2',4,4',6'-tetrahydroxychalcone + 3 CO2 + 4 CoA. Its pathway is secondary metabolite biosynthesis; flavonoid biosynthesis. In terms of biological role, the primary product of this enzyme is 4,2',4',6'-tetrahydroxychalcone (also termed naringenin-chalcone or chalcone) which can under specific conditions spontaneously isomerize into naringenin. The chain is Chalcone synthase 4 (CHS4) from Bromheadia finlaysoniana (Orchid).